A 250-amino-acid polypeptide reads, in one-letter code: Ubiquinone/menaquinone biosynthesis C-methyltransferase UbiE (250 aa).

Residues Thr-74, Asp-94, 122 to 123 (DA), and Ser-139 contribute to the S-adenosyl-L-methionine site.

It belongs to the class I-like SAM-binding methyltransferase superfamily. MenG/UbiE family.

It catalyses the reaction a 2-demethylmenaquinol + S-adenosyl-L-methionine = a menaquinol + S-adenosyl-L-homocysteine + H(+). The enzyme catalyses a 2-methoxy-6-(all-trans-polyprenyl)benzene-1,4-diol + S-adenosyl-L-methionine = a 5-methoxy-2-methyl-3-(all-trans-polyprenyl)benzene-1,4-diol + S-adenosyl-L-homocysteine + H(+). The protein operates within quinol/quinone metabolism; menaquinone biosynthesis; menaquinol from 1,4-dihydroxy-2-naphthoate: step 2/2. It functions in the pathway cofactor biosynthesis; ubiquinone biosynthesis. Methyltransferase required for the conversion of demethylmenaquinol (DMKH2) to menaquinol (MKH2) and the conversion of 2-polyprenyl-6-methoxy-1,4-benzoquinol (DDMQH2) to 2-polyprenyl-3-methyl-6-methoxy-1,4-benzoquinol (DMQH2). The polypeptide is Ubiquinone/menaquinone biosynthesis C-methyltransferase UbiE (Roseobacter denitrificans (strain ATCC 33942 / OCh 114) (Erythrobacter sp. (strain OCh 114))).